Here is a 1723-residue protein sequence, read N- to C-terminus: MRKLLLLIAASLLGVGLYAQNAKIKLDAPTTRTTCTNNSFKQFDASFSFNEVELTKVETKGGTFASVSIPGAFPTGEVGSPEVPAVRKLIAVPVGATPVVRVKSFTEQVYSLNQYGSEKLMPHQPSMSKSDDPEKVPFAYNAAAYARKGFVGQELTQVEMLGTMRGVRIAALTINPVQYDVVANQLKVRNNIEIEVSFQGADEVATQRLYDASFSPYFETAYKQLFNRDVYTDHGDLYNTPVRMLVVAGAKFKEALKPWLTWKAQKGFYLDVHYTDEAEVGTTNASIKAFIHKKYNDGLAASAAPVFLALVGDTDVISGEKGKKTKKVTDLYYSAVDGDYFPEMYTFRMSASSPEELTNIIDKVLMYEKATMPDKSYLEKALLIAGADSYWNPKIGQQTIKYAVQYYYNQDHGYTDVYSYPKAPYTGCYSHLNTGVGFANYTAHGSETSWADPSVTATQVKALTNKNKYFLAIGNCCVTAQFDYPQPCFGEVMTRVKEKGAYAYIGSSPNSYWGEDYYWSVGANAVFGVQPTFEGTSMGSYDATFLEDSYNTVNSIMWAGNLAATHAENIGNVTHIGAHYYWEAYHVLGDGSVMPYRAMPKTNTYTLPASLPQNQASYSIQASAGSYVAISKDGVLYGTGVANASGVATVNMTKQITENGNYDVVITRSNYLPVIKQIQAGEPSPYQPVSNLTATTQGQKVTLKWDAPSAKKAEGSREVKRIGDGLFVTIEPANDVRANEAKVVLAADNVWGDNTGYQFLLDADHNTFGSVIPATGPLFTGTASSNLYSANFEYLIPANADPVVTTQNIIVTGQGEVVIPGGVYDYCITNPEPASGKMWIAGDGGNQPARYDDFTFEAGKKYTFTMRRAGMGDGTDMEVEDDSPASYTYTVYRDGTKIKEGLTATTFEEDGVAAGNHEYCVEVKYTAGVSPKVCKDVTVEGSNEFAPVQNLTGSAVGQKVTLKWDAPNGTPNPNPNPNPGTTTLSESFENGIPASWKTIDADGDGHGWKPGNAPGIAGYNSNGCVYSESFGLGGIGVLTPDNYLITPALDLPNGGKLTFWVCAQDANYASEHYAVYASSTGNDASNFTNALLEETITAKGVRSPEAIRGRIQGTWRQKTVDLPAGTKYVAFRHFQSTDMFYIDLDEVEIKANGKRADFTETFESSTHGEAPAEWTTIDADGDGQGWLCLSSGQLDWLTAHGGTNVVASFSWNGMALNPDNYLISKDVTGATKVKYYYAVNDGFPGDHYAVMISKTGTNAGDFTVVFEETPNGINKGGARFGLSTEADGAKPQSVWIERTVDLPAGTKYVAFRHYNCSDLNYILLDDIQFTMGGSPTPTDYTYTVYRDGTKIKEGLTETTFEEDGVATGNHEYCVEVKYTAGVSPKKCVNVTINPTQFNPVKNLKAQPDGGDVVLKWEAPSAKKAEGSREVKRIGDGLFVTIEPANDVRANEAKVVLAADNVWGDNTGYQFLLDADHNTFGSVIPATGPLFTGTASSNLYSANFEYLIPANADPVVTTQNIIVTGQGEVVIPGGVYDYCITNPEPASGKMWIAGDGGNQPARYDDFTFEAGKKYTFTMRRAGMGDGTDMEVEDDSPASYTYTVYRDGTKIKEGLTETTYRDAGMSAQSHEYCVEVKYAAGVSPKVCVDYIPDGVADVTAQKPYTLTVVGKTITVTCQGEAMIYDMNGRRLAAGRNTVVYTAQGGYYAVMVVVDGKSYVEKLAVK.

Positions 1-24 are cleaved as a signal peptide; sequence MRKLLLLIAASLLGVGLYAQNAKI. The propeptide occupies 25–228; sequence KLDAPTTRTT…ETAYKQLFNR (204 aa). The Ca(2+) site is built by Asp-313, Asp-337, Asp-339, Phe-341, and Glu-343. His-444 serves as the catalytic Proton donor. Cys-477 functions as the Nucleophile in the catalytic mechanism. Ca(2+) contacts are provided by Phe-482 and Glu-491. The segment at 965–985 is disordered; sequence DAPNGTPNPNPNPNPGTTTLS. Residues Ser-987, Glu-989, Asp-1000, Asp-1002, Asp-1004, His-1006, Ser-1021, Gly-1023, Asn-1042, Asp-1145, and Glu-1146 each contribute to the Ca(2+) site.

The protein belongs to the peptidase C25 family. In terms of processing, proteolytically cleaved into a catalytic subunit and three adhesins. Arg-gingipain is involved in this post-translational processing.

It localises to the secreted. It carries out the reaction Endopeptidase with strict specificity for lysyl bonds.. Functionally, cysteine proteinase with a strong preference for substrates with Lys in the P1 position. Hydrolyzes bovine hemoglobin, bovine serum albumin, casein, human placental type I collagen and human IgA and IgG. Disrupts the functions of polymorphonuclear leukocytes. May act as a virulence factor in the development of peridontal disease. Involved in the coaggregation of P.gingivalis with other oral bacteria. The chain is Lys-gingipain HG66 from Porphyromonas gingivalis (Bacteroides gingivalis).